The primary structure comprises 526 residues: 4-alpha-glucanotransferase (526 aa).

This sequence belongs to the disproportionating enzyme family.

The protein localises to the cytoplasm. The enzyme catalyses Transfers a segment of a (1-&gt;4)-alpha-D-glucan to a new position in an acceptor, which may be glucose or a (1-&gt;4)-alpha-D-glucan.. The polypeptide is 4-alpha-glucanotransferase (malQ) (Chlamydia pneumoniae (Chlamydophila pneumoniae)).